A 193-amino-acid chain; its full sequence is Xanthine phosphoribosyltransferase (193 aa).

Xanthine contacts are provided by leucine 20 and threonine 27. 128–132 (ANGQA) contacts 5-phospho-alpha-D-ribose 1-diphosphate. Position 156 (lysine 156) interacts with xanthine.

This sequence belongs to the purine/pyrimidine phosphoribosyltransferase family. Xpt subfamily. As to quaternary structure, homodimer.

It is found in the cytoplasm. The catalysed reaction is XMP + diphosphate = xanthine + 5-phospho-alpha-D-ribose 1-diphosphate. It participates in purine metabolism; XMP biosynthesis via salvage pathway; XMP from xanthine: step 1/1. In terms of biological role, converts the preformed base xanthine, a product of nucleic acid breakdown, to xanthosine 5'-monophosphate (XMP), so it can be reused for RNA or DNA synthesis. The chain is Xanthine phosphoribosyltransferase from Streptococcus pyogenes serotype M3 (strain ATCC BAA-595 / MGAS315).